The primary structure comprises 50 residues: Parvalbumin (50 aa).

The region spanning lysine 38 to leucine 50 is the EF-hand domain.

The protein belongs to the parvalbumin family.

Probably regulates the activity of the caudal neurosecretory system. Binds two calcium ions. In Scyliorhinus canicula (Small-spotted catshark), this protein is Parvalbumin.